The sequence spans 171 residues: UPF0312 protein SAB2563 (171 aa).

It belongs to the UPF0312 family.

This is UPF0312 protein SAB2563 from Staphylococcus aureus (strain bovine RF122 / ET3-1).